Reading from the N-terminus, the 681-residue chain is Peroxisomal acyl-coenzyme A oxidase 2 (681 aa).

Residues 1–28 are disordered; the sequence is MGNPGDRVSLGETWSREVHPDIDSERHS. Ser-9 carries the post-translational modification Phosphoserine. At Thr-13 the chain carries Phosphothreonine. Residues 14-28 are compositionally biased toward basic and acidic residues; the sequence is WSREVHPDIDSERHS. N6-succinyllysine is present on residues Lys-66, Lys-137, Lys-303, Lys-453, Lys-561, and Lys-667. A Microbody targeting signal motif is present at residues 679 to 681; the sequence is PKL.

It belongs to the acyl-CoA oxidase family. As to quaternary structure, homodimer. Requires FAD as cofactor. Acetylation of Lys-667 is observed in liver mitochondria from fasted mice but not from fed mice.

Its subcellular location is the peroxisome. It catalyses the reaction (25R)-3alpha,7alpha,12alpha-trihydroxy-5beta-cholestan-26-oyl-CoA + A + H2O = (24R,25R)-3alpha,7alpha,12alpha,24-tetrahydroxy-5beta-cholestan-26-oyl-CoA + AH2. The catalysed reaction is (25S)-3alpha,7alpha,12alpha-trihydroxy-5beta-cholestan-26-oyl-CoA + O2 = (24E)-3alpha,7alpha,12alpha-trihydroxy-5beta-cholest-24-en-26-oyl-CoA + H2O2. Oxidizes the CoA esters of the bile acid intermediates di- and tri-hydroxycoprostanic acids. Capable of oxidizing short as well as long chain 2-methyl branched fatty acids. This is Peroxisomal acyl-coenzyme A oxidase 2 from Mus musculus (Mouse).